Here is a 728-residue protein sequence, read N- to C-terminus: Double-strand break repair protein mre-11 (728 aa).

Residues 1–12 (MCGSDDSFDDFV) are compositionally biased toward acidic residues. The disordered stretch occupies residues 1–45 (MCGSDDSFDDFVPDSQEPASSRTRNQDHLDDDEVPCSQRPDAAND). Mn(2+) contacts are provided by D73, H75, D113, and N181. Residue H182 is the Proton donor of the active site. Residues H269, H301, and H303 each contribute to the Mn(2+) site. The tract at residues 601-728 (KNPVADVEME…PSKKRDLSFF (128 aa)) is disordered. A compositionally biased stretch (acidic residues) spans 607-616 (VEMEEDEDDP). The span at 622–632 (PQSTSRTNYAS) shows a compositional bias: polar residues. Over residues 634–645 (SEDEVANSDEEM) the composition is skewed to acidic residues.

It belongs to the MRE11/RAD32 family. In terms of assembly, component of the MRN complex composed of two heterodimers rad-50 and mre-11 associated with a single nbs-1. Requires Mn(2+) as cofactor.

The protein resides in the nucleus. Its subcellular location is the chromosome. Its function is as follows. Core component of the MRN complex, which plays a central role in double-strand break (DSB) repair, DNA recombination, maintenance of telomere integrity and meiosis. The MRN complex is involved in the repair of DNA double-strand breaks (DSBs) via homologous recombination (HR), an error-free mechanism which primarily occurs during S and G2 phases. The complex (1) mediates the end resection of damaged DNA, which generates proper single-stranded DNA, a key initial steps in HR, and is (2) required for the recruitment of other repair factors and efficient activation of ATM and ATR upon DNA damage. Within the MRN complex, mre-11 possesses both single-strand endonuclease activity and double-strand-specific 3'-5' exonuclease activity. Mre-11 first endonucleolytically cleaves the 5' strand at DNA DSB ends to prevent non-homologous end joining (NHEJ) and licence HR. It then generates a single-stranded DNA gap via 3' to 5' exonucleolytic degradation, which is required for single-strand invasion and recombination. Required for meiotic crossing over and chiasma formation. Pachytene morphology and homolog pairing are normal. Vital in long term for maintenance of reproductive capacity of subsequent generations. In Caenorhabditis elegans, this protein is Double-strand break repair protein mre-11.